We begin with the raw amino-acid sequence, 273 residues long: Inositol monophosphatase 1 (273 aa).

Residues E71, D91, V93, and D94 each contribute to the Mg(2+) site. Residue E71 coordinates substrate. Substrate is bound by residues 93–96 (VDGT), 194–196 (GSC), and D221. D221 contributes to the Mg(2+) binding site.

The protein belongs to the inositol monophosphatase superfamily. Mg(2+) is required as a cofactor. As to expression, expressed in seedlings, flowers, young and matures green fruits. Detected in roots and stems.

It catalyses the reaction a myo-inositol phosphate + H2O = myo-inositol + phosphate. Its pathway is polyol metabolism; myo-inositol biosynthesis; myo-inositol from D-glucose 6-phosphate: step 2/2. Functionally, responsible for the provision of inositol required for synthesis of phosphatidylinositol and polyphosphoinositides. The polypeptide is Inositol monophosphatase 1 (IMP1) (Solanum lycopersicum (Tomato)).